Consider the following 175-residue polypeptide: Large ribosomal subunit protein uL15 (175 aa).

The span at 1-13 shows a compositional bias: basic and acidic residues; the sequence is MTIKLNELRDNNG. Disordered stretches follow at residues 1–44 and 150–175; these read MTIK…KARS and VELP…AKNA. The span at 23-37 shows a compositional bias: gly residues; that stretch reads RGIGSGKGKTAGRGQ.

Belongs to the universal ribosomal protein uL15 family. As to quaternary structure, part of the 50S ribosomal subunit.

In terms of biological role, binds to the 23S rRNA. The polypeptide is Large ribosomal subunit protein uL15 (Sphingopyxis alaskensis (strain DSM 13593 / LMG 18877 / RB2256) (Sphingomonas alaskensis)).